A 168-amino-acid chain; its full sequence is ATP synthase subunit b (168 aa).

The chain crosses the membrane as a helical span at residues 11 to 31 (EISIINTLWYLIVFSILLLAV).

Belongs to the ATPase B chain family. In terms of assembly, F-type ATPases have 2 components, F(1) - the catalytic core - and F(0) - the membrane proton channel. F(1) has five subunits: alpha(3), beta(3), gamma(1), delta(1), epsilon(1). F(0) has three main subunits: a(1), b(2) and c(10-14). The alpha and beta chains form an alternating ring which encloses part of the gamma chain. F(1) is attached to F(0) by a central stalk formed by the gamma and epsilon chains, while a peripheral stalk is formed by the delta and b chains.

The protein resides in the cell membrane. F(1)F(0) ATP synthase produces ATP from ADP in the presence of a proton or sodium gradient. F-type ATPases consist of two structural domains, F(1) containing the extramembraneous catalytic core and F(0) containing the membrane proton channel, linked together by a central stalk and a peripheral stalk. During catalysis, ATP synthesis in the catalytic domain of F(1) is coupled via a rotary mechanism of the central stalk subunits to proton translocation. Functionally, component of the F(0) channel, it forms part of the peripheral stalk, linking F(1) to F(0). The sequence is that of ATP synthase subunit b from Lactobacillus delbrueckii subsp. bulgaricus (strain ATCC 11842 / DSM 20081 / BCRC 10696 / JCM 1002 / NBRC 13953 / NCIMB 11778 / NCTC 12712 / WDCM 00102 / Lb 14).